Consider the following 365-residue polypeptide: Methylthioribose-1-phosphate isomerase (365 aa).

Aspartate 249 functions as the Proton donor in the catalytic mechanism.

This sequence belongs to the eIF-2B alpha/beta/delta subunits family. MtnA subfamily.

It is found in the cytoplasm. Its subcellular location is the nucleus. The catalysed reaction is 5-(methylsulfanyl)-alpha-D-ribose 1-phosphate = 5-(methylsulfanyl)-D-ribulose 1-phosphate. Its pathway is amino-acid biosynthesis; L-methionine biosynthesis via salvage pathway; L-methionine from S-methyl-5-thio-alpha-D-ribose 1-phosphate: step 1/6. In terms of biological role, catalyzes the interconversion of methylthioribose-1-phosphate (MTR-1-P) into methylthioribulose-1-phosphate (MTRu-1-P). The protein is Methylthioribose-1-phosphate isomerase of Ostreococcus lucimarinus (strain CCE9901).